The following is a 419-amino-acid chain: UDP-N-acetylglucosamine 1-carboxyvinyltransferase (419 aa).

Position 22–23 (22–23) interacts with phosphoenolpyruvate; it reads KN. A UDP-N-acetyl-alpha-D-glucosamine-binding site is contributed by Arg91. Cys115 (proton donor) is an active-site residue. The residue at position 115 (Cys115) is a 2-(S-cysteinyl)pyruvic acid O-phosphothioketal. UDP-N-acetyl-alpha-D-glucosamine-binding positions include 120–124, 160–163, Asp305, and Val327; these read RPVDL and KVSV.

It belongs to the EPSP synthase family. MurA subfamily.

The protein localises to the cytoplasm. The catalysed reaction is phosphoenolpyruvate + UDP-N-acetyl-alpha-D-glucosamine = UDP-N-acetyl-3-O-(1-carboxyvinyl)-alpha-D-glucosamine + phosphate. It participates in cell wall biogenesis; peptidoglycan biosynthesis. In terms of biological role, cell wall formation. Adds enolpyruvyl to UDP-N-acetylglucosamine. This chain is UDP-N-acetylglucosamine 1-carboxyvinyltransferase, found in Shigella dysenteriae serotype 1 (strain Sd197).